The primary structure comprises 185 residues: Anterior gradient protein 2 (185 aa).

The first 18 residues, 1 to 18, serve as a signal peptide directing secretion; that stretch reads MQTGLSLACLVLLCSVLG. Residues 25–45 are disordered; it reads PKRQAGATDTNGAAKSEPAPV.

This sequence belongs to the AGR family. As to expression, expressed in the anterior of the dorsal ectoderm from late gastrula stages onwards. Becomes restricted to the cement gland anlage at the onset of neurulation (stages 13 to 14) and expressed exclusively in the cement gland from stage 18 onwards, with transient expression in the hatching gland during tailbud stages.

It is found in the secreted. Involved in cement gland formation; probably specifies dorsal ectoderm to acquire an anterior fate such as cement gland and forebrain. Signals via the FGF pathway. The polypeptide is Anterior gradient protein 2 (ag2) (Xenopus laevis (African clawed frog)).